A 458-amino-acid chain; its full sequence is Alpha-2C adrenergic receptor (458 aa).

Residues 1–51 (MASPALAAALAAAAAEGPNGSDAGEWGSGGGANASGTDWVPPPGQYSAGAV) are Extracellular-facing. 2 N-linked (GlcNAc...) asparagine glycosylation sites follow: asparagine 19 and asparagine 33. Residues 52-76 (AGLAAVVGFLIVFTVVGNVLVVIAV) traverse the membrane as a helical segment. At 77-88 (LTSRALRAPQNL) the chain is on the cytoplasmic side. A helical membrane pass occupies residues 89 to 114 (FLVSLASADILVATLVMPFSLANELM). The Extracellular portion of the chain corresponds to 115 to 124 (AYWYFGQVWC). Cysteine 124 and cysteine 202 are oxidised to a cystine. The chain crosses the membrane as a helical span at residues 125–147 (GVYLALDVLFCTSSIVHLCAISL). Topologically, residues 148–168 (DRYWSVTQAVEYNLKRTPRRV) are cytoplasmic. A helical transmembrane segment spans residues 169 to 191 (KATIVAVWLISAVISFPPLVSFY). The Extracellular segment spans residues 192–207 (RRPDGAAYPQCGLNDE). The chain crosses the membrane as a helical span at residues 208-231 (TWYILSSCIGSFFAPCLIMGLVYA). Over 232–379 (RIYRVAKLRT…QAREKRFTFV (148 aa)) the chain is Cytoplasmic. The disordered stretch occupies residues 245 to 343 (SEKRGPAGPD…SPGPGGRLSR (99 aa)). The segment covering 291 to 303 (RRRRRGALRRGGR) has biased composition (basic residues). A helical membrane pass occupies residues 380-403 (LAVVMGVFVLCWFPFFFSYSLYGI). Over 404-416 (CREACQLPEPLFK) the chain is Extracellular. A helical transmembrane segment spans residues 417 to 437 (FFFWIGYCNSSLNPVIYTVFN). Over 438–458 (QDFRRSFKHILFRRRRRGFRQ) the chain is Cytoplasmic.

This sequence belongs to the G-protein coupled receptor 1 family. Adrenergic receptor subfamily. ADRA2C sub-subfamily.

The protein resides in the cell membrane. In terms of biological role, alpha-2 adrenergic receptors mediate the catecholamine-induced inhibition of adenylate cyclase through the action of G proteins. This chain is Alpha-2C adrenergic receptor (Adra2c), found in Mus musculus (Mouse).